The primary structure comprises 1021 residues: Sodium/potassium-transporting ATPase subunit alpha-1 (1021 aa).

The propeptide occupies Met1–Val5. Over residues Met1–Glu11 the composition is skewed to basic and acidic residues. Residues Met1–Glu36 form a disordered region. The Cytoplasmic segment spans residues Gly6–Pro85. An N6-acetyllysine modification is found at Lys9. Tyr10 bears the Phosphotyrosine mark. Position 16 is a phosphoserine; by PKC (Ser16). N6-acetyllysine is present on Lys21. Over residues Lys26 to Glu36 the composition is skewed to basic and acidic residues. Residues Ser38 and Ser45 each carry the phosphoserine modification. Residues Pro80–Pro82 are phosphoinositide-3 kinase binding. The chain crosses the membrane as a helical span at residues Glu86–Ala106. Topologically, residues Val107–Tyr129 are extracellular. Residues Leu130–Ala150 form a helical membrane-spanning segment. Over Lys151–Ile286 the chain is Cytoplasmic. Ser226 bears the Phosphoserine mark. Tyr258 carries the post-translational modification Phosphotyrosine. Residues Glu287–Ile306 form a helical membrane-spanning segment. At Leu307–Ala318 the chain is on the extracellular side. Residues Val319–Ala336 traverse the membrane as a helical segment. The Cytoplasmic segment spans residues Thr337–Leu770. Asp374 serves as the catalytic 4-aspartylphosphate intermediate. 2 positions are modified to phosphoserine: Ser450 and Ser482. Lys485 serves as a coordination point for ATP. Residue Tyr540 is modified to Phosphotyrosine. Residues Arg594 to Asp715 are mediates interaction with SCN7A. At Ser666 the chain carries Phosphoserine. Positions 715 and 719 each coordinate Mg(2+). Residues Lys771 to Ile790 form a helical membrane-spanning segment. Residues Phe791 to Leu800 are Extracellular-facing. Residues Gly801 to Ala821 form a helical membrane-spanning segment. The Cytoplasmic portion of the chain corresponds to Tyr822–Lys841. A helical transmembrane segment spans residues Leu842 to Phe864. Over Phe865 to Cys916 the chain is Extracellular. Residues His917–Lys936 traverse the membrane as a helical segment. Over Thr937–Asn949 the chain is Cytoplasmic. Residue Ser941 is modified to Phosphoserine; by PKA. Residues Lys950–Tyr968 form a helical membrane-spanning segment. Topologically, residues Cys969–Pro983 are extracellular. A helical transmembrane segment spans residues Thr984 to Lys1004. Topologically, residues Leu1005 to Tyr1021 are cytoplasmic.

It belongs to the cation transport ATPase (P-type) (TC 3.A.3) family. Type IIC subfamily. As to quaternary structure, the sodium/potassium-transporting ATPase is composed of a catalytic alpha subunit, an auxiliary non-catalytic beta subunit and an additional regulatory subunit. Interacts with regulatory subunit FXYD1. Interacts with regulatory subunit FXYD3. Interacts with SIK1. Interacts with SLC35G1 and STIM1. Interacts with CLN3; this interaction regulates the sodium/potassium-transporting ATPase complex localization at the plasma membrane. Interacts with SCN7A; activates ATP1A1 P-type sodium:potassium-exchanging transporter activity which indirectly signals to nearby neurons to regulate sodium homeostasis. Post-translationally, phosphorylation on Tyr-10 modulates pumping activity. Phosphorylation of Ser-941 by PKA modulates the response of ATP1A1 to PKC. Dephosphorylation by protein phosphatase 2A (PP2A) following increases in intracellular sodium, leading to increase catalytic activity.

It is found in the cell membrane. The protein resides in the basolateral cell membrane. The protein localises to the sarcolemma. It localises to the cell projection. Its subcellular location is the axon. It is found in the melanosome. The catalysed reaction is K(+)(out) + Na(+)(in) + ATP + H2O = K(+)(in) + Na(+)(out) + ADP + phosphate + H(+). Specifically inhibited by cardiac glycosides such as digoxin or ouabain. In terms of biological role, this is the catalytic component of the active enzyme, which catalyzes the hydrolysis of ATP coupled with the exchange of sodium and potassium ions across the plasma membrane. This action creates the electrochemical gradient of sodium and potassium ions, providing the energy for active transport of various nutrients. Could also be part of an osmosensory signaling pathway that senses body-fluid sodium levels and controls salt intake behavior as well as voluntary water intake to regulate sodium homeostasis. In Ovis aries (Sheep), this protein is Sodium/potassium-transporting ATPase subunit alpha-1 (ATP1A1).